The primary structure comprises 89 residues: Putative RING finger protein 121R (89 aa).

Residues 45 to 78 form an RING-type zinc finger; sequence CPICLIAKVNTVLECTHVLCSNCVKKINVCPICR.

This chain is Putative RING finger protein 121R, found in Invertebrate iridescent virus 6 (IIV-6).